The chain runs to 199 residues: Recombination protein RecR (199 aa).

The C4-type zinc finger occupies 57-72 (CSICGNITEGDPCSIC). The 97-residue stretch at 80 to 176 (THVLVVEQPK…KVTRLAHGLS (97 aa)) folds into the Toprim domain.

Belongs to the RecR family.

May play a role in DNA repair. It seems to be involved in an RecBC-independent recombinational process of DNA repair. It may act with RecF and RecO. The protein is Recombination protein RecR of Levilactobacillus brevis (strain ATCC 367 / BCRC 12310 / CIP 105137 / JCM 1170 / LMG 11437 / NCIMB 947 / NCTC 947) (Lactobacillus brevis).